The chain runs to 250 residues: Exosome complex component Rrp41 (250 aa).

Belongs to the RNase PH family. Rrp41 subfamily. Component of the archaeal exosome complex. Forms a hexameric ring-like arrangement composed of 3 Rrp41-Rrp42 heterodimers. The hexameric ring associates with a trimer of Rrp4 and/or Csl4 subunits.

The protein resides in the cytoplasm. Functionally, catalytic component of the exosome, which is a complex involved in RNA degradation. Has 3'-&gt;5' exoribonuclease activity. Can also synthesize heteromeric RNA-tails. The protein is Exosome complex component Rrp41 of Pyrococcus furiosus (strain ATCC 43587 / DSM 3638 / JCM 8422 / Vc1).